A 314-amino-acid polypeptide reads, in one-letter code: DNA-directed RNA polymerase subunit alpha (314 aa).

The tract at residues 1 to 228 (MAQFQIECVE…NLFIPLKDLN (228 aa)) is alpha N-terminal domain (alpha-NTD). The tract at residues 243 to 314 (PESQIPIEEL…ITLPHEKAKA (72 aa)) is alpha C-terminal domain (alpha-CTD).

The protein belongs to the RNA polymerase alpha chain family. In terms of assembly, homodimer. In cyanobacteria the RNAP catalytic core is composed of 2 alpha, 1 beta, 1 beta', 1 gamma and 1 omega subunit. When a sigma factor is associated with the core the holoenzyme is formed, which can initiate transcription.

It catalyses the reaction RNA(n) + a ribonucleoside 5'-triphosphate = RNA(n+1) + diphosphate. Its function is as follows. DNA-dependent RNA polymerase catalyzes the transcription of DNA into RNA using the four ribonucleoside triphosphates as substrates. This is DNA-directed RNA polymerase subunit alpha from Synechocystis sp. (strain ATCC 27184 / PCC 6803 / Kazusa).